Reading from the N-terminus, the 199-residue chain is MAFELPNLPYGFDALEPHIDKQTMEIHHDKHHNTYVTKLNAAVEGTDLESKSIEEIVANLDSVPENIQTAVRNNGGGHLNHSLFWELLTPNSEEKGTVVDKIKEQWGSLDAFKEEFADKAAARFGSGWAWLVVNNGNLEIVTTPNQDNPLTEGKTPILGLDVWEHAYYLKYQNKRPDYISAFWNVVNWEKVDELYNAAK.

Fe(3+)-binding residues include H27, H81, D161, and H165. H27, H81, D161, and H165 together coordinate Mn(2+).

Belongs to the iron/manganese superoxide dismutase family. Homodimer. It depends on Mn(2+) as a cofactor. Requires Fe(3+) as cofactor.

It carries out the reaction 2 superoxide + 2 H(+) = H2O2 + O2. Its function is as follows. Destroys superoxide anion radicals which are normally produced within the cells and which are toxic to biological systems. Catalyzes the dismutation of superoxide anion radicals into O2 and H2O2 by successive reduction and oxidation of the transition metal ion at the active site. This is Superoxide dismutase [Mn/Fe] (sodA) from Staphylococcus saprophyticus subsp. saprophyticus (strain ATCC 15305 / DSM 20229 / NCIMB 8711 / NCTC 7292 / S-41).